The primary structure comprises 698 residues: Polyphosphate kinase (698 aa).

Residue asparagine 63 participates in ATP binding. 2 residues coordinate Mg(2+): arginine 390 and arginine 420. Histidine 450 serves as the catalytic Phosphohistidine intermediate. Residues tyrosine 483, arginine 579, and histidine 607 each contribute to the ATP site.

The protein belongs to the polyphosphate kinase 1 (PPK1) family. Mg(2+) serves as cofactor. In terms of processing, an intermediate of this reaction is the autophosphorylated ppk in which a phosphate is covalently linked to a histidine residue through a N-P bond.

The catalysed reaction is [phosphate](n) + ATP = [phosphate](n+1) + ADP. In terms of biological role, catalyzes the reversible transfer of the terminal phosphate of ATP to form a long-chain polyphosphate (polyP). The chain is Polyphosphate kinase from Xylella fastidiosa (strain Temecula1 / ATCC 700964).